Consider the following 248-residue polypeptide: Leucyl/phenylalanyl-tRNA--protein transferase (248 aa).

It belongs to the L/F-transferase family.

It is found in the cytoplasm. The catalysed reaction is N-terminal L-lysyl-[protein] + L-leucyl-tRNA(Leu) = N-terminal L-leucyl-L-lysyl-[protein] + tRNA(Leu) + H(+). It carries out the reaction N-terminal L-arginyl-[protein] + L-leucyl-tRNA(Leu) = N-terminal L-leucyl-L-arginyl-[protein] + tRNA(Leu) + H(+). It catalyses the reaction L-phenylalanyl-tRNA(Phe) + an N-terminal L-alpha-aminoacyl-[protein] = an N-terminal L-phenylalanyl-L-alpha-aminoacyl-[protein] + tRNA(Phe). Its function is as follows. Functions in the N-end rule pathway of protein degradation where it conjugates Leu, Phe and, less efficiently, Met from aminoacyl-tRNAs to the N-termini of proteins containing an N-terminal arginine or lysine. This Oleidesulfovibrio alaskensis (strain ATCC BAA-1058 / DSM 17464 / G20) (Desulfovibrio alaskensis) protein is Leucyl/phenylalanyl-tRNA--protein transferase.